We begin with the raw amino-acid sequence, 395 residues long: Guanine nucleotide-binding protein subunit beta-5b (395 aa).

WD repeat units follow at residues 103–142 (GHGNKVLCMDWCRDKRRIVSSSQDGKVIVWDAYTTNKEHA), 145–184 (MPCTWVMACAYAPSGCAVACGGLDNKCSVYPLSLDKNENL), 193–234 (MHTN…QSFH), 235–276 (GHSA…NVQS), 279–318 (THDSDINSVKYYPSGDAFASGSDDATCRLYDLRADREVAI), 320–362 (SKDS…RVAI), and 365–395 (GHENRVSTVRVSPDGTAFCSGSWDNTLRIWA).

The protein belongs to the WD repeat G protein beta family. May interact with RGS9; this interaction stabilizes both proteins and increases RGS9 GTPase-activating protein (GAP) activity, hence accelerating the deactivation of D(2) dopamine receptor-mediated signaling.

The protein resides in the membrane. Enhances GTPase-activating protein (GAP) activity of regulator of G protein signaling (RGS) proteins, such as RGS7 and RGS9, hence involved in the termination of the signaling initiated by the G protein coupled receptors (GPCRs) by accelerating the GTP hydrolysis on the G-alpha subunits, thereby promoting their inactivation. Increases RGS7 GTPase-activating protein (GAP) activity, thereby regulating mood and cognition. Increases RGS9 GTPase-activating protein (GAP) activity, hence contributes to the deactivation of G protein signaling initiated by D(2) dopamine receptors. Along with gnb5a, plays an important role in neuronal signaling, including in the parasympathetic, but not sympathetic, control of heart rate. The polypeptide is Guanine nucleotide-binding protein subunit beta-5b (Danio rerio (Zebrafish)).